Consider the following 297-residue polypeptide: Lipoprotein NlpD/LppB homolog (297 aa).

Positions Met1–Gly22 are cleaved as a signal peptide. Residue Cys23 is the site of N-palmitoyl cysteine attachment. Cys23 is lipidated: S-diacylglycerol cysteine. A LysM domain is found at Gly67–Phe111. The tract at residues Thr134–Pro168 is disordered.

Belongs to the E.coli NlpD/Haemophilus LppB family.

The protein resides in the cell inner membrane. This Pseudomonas aeruginosa (strain ATCC 15692 / DSM 22644 / CIP 104116 / JCM 14847 / LMG 12228 / 1C / PRS 101 / PAO1) protein is Lipoprotein NlpD/LppB homolog.